The following is a 318-amino-acid chain: MKSLNIIFAGTPDFAAQHLQAILNSQHNVIAVYTQPDKPAGRGKKLQASPVKQLAEQNNIPVYQPKSLRKEEAQSELKALNADVMVVVAYGLILPKAVLDAPRLGCLNVHGSILPRWRGAAPIQRSIWAGDVQTGVTIMQMDESLDTGDMLHKVYCDILPTETSTSLYNKLAELATSALIDVLDNLENSKFIAEKQDGSQSNYAEKLSKEEAQLDWSLPAMQLERNIRAFNPWPIAYFSTEDKDGNAQTLKVYQAEVLPHQDKPAGTILSADKNGIQIATVDGVLNLLQLQPAGKKPMSAQDLLNGRAEWFTIGKVLA.

Position 112–115 (112–115) interacts with (6S)-5,6,7,8-tetrahydrofolate; it reads SILP.

The protein belongs to the Fmt family.

It carries out the reaction L-methionyl-tRNA(fMet) + (6R)-10-formyltetrahydrofolate = N-formyl-L-methionyl-tRNA(fMet) + (6S)-5,6,7,8-tetrahydrofolate + H(+). In terms of biological role, attaches a formyl group to the free amino group of methionyl-tRNA(fMet). The formyl group appears to play a dual role in the initiator identity of N-formylmethionyl-tRNA by promoting its recognition by IF2 and preventing the misappropriation of this tRNA by the elongation apparatus. The protein is Methionyl-tRNA formyltransferase of Haemophilus influenzae (strain PittGG).